The chain runs to 349 residues: uncharacterized protein (349 aa).

Positions His116 to Gly135 are enriched in polar residues. Positions His116–Tyr148 are disordered.

This is an uncharacterized protein from Caenorhabditis elegans.